The following is a 203-amino-acid chain: ATP-dependent Clp protease proteolytic subunit 1 (203 aa).

The Nucleophile role is filled by Ser98. Residue His123 is part of the active site.

This sequence belongs to the peptidase S14 family. In terms of assembly, fourteen ClpP subunits assemble into 2 heptameric rings which stack back to back to give a disk-like structure with a central cavity, resembling the structure of eukaryotic proteasomes.

The protein resides in the cytoplasm. The enzyme catalyses Hydrolysis of proteins to small peptides in the presence of ATP and magnesium. alpha-casein is the usual test substrate. In the absence of ATP, only oligopeptides shorter than five residues are hydrolyzed (such as succinyl-Leu-Tyr-|-NHMec, and Leu-Tyr-Leu-|-Tyr-Trp, in which cleavage of the -Tyr-|-Leu- and -Tyr-|-Trp bonds also occurs).. In terms of biological role, cleaves peptides in various proteins in a process that requires ATP hydrolysis. Has a chymotrypsin-like activity. Plays a major role in the degradation of misfolded proteins. This is ATP-dependent Clp protease proteolytic subunit 1 from Chlamydia felis (strain Fe/C-56) (Chlamydophila felis).